A 454-amino-acid chain; its full sequence is GTPase Der (454 aa).

EngA-type G domains follow at residues 4–167 (AIVA…SEDK) and 188–363 (LQLA…ASWQ). GTP-binding positions include 10–17 (GKPNVGKS), 56–60 (DTPGL), 121–124 (NKTE), 194–201 (GRPNCGKS), 241–245 (DTAGV), and 306–309 (NKCD). Residues 364–450 (KRVTTGTLNQ…PVRLSFVKGK (87 aa)) form the KH-like domain.

It belongs to the TRAFAC class TrmE-Era-EngA-EngB-Septin-like GTPase superfamily. EngA (Der) GTPase family. Associates with the 50S ribosomal subunit.

In terms of biological role, GTPase that plays an essential role in the late steps of ribosome biogenesis. The chain is GTPase Der from Orientia tsutsugamushi (strain Boryong) (Rickettsia tsutsugamushi).